Consider the following 357-residue polypeptide: Heat-inducible transcription repressor HrcA (357 aa).

It belongs to the HrcA family.

Functionally, negative regulator of class I heat shock genes (grpE-dnaK-dnaJ and groELS operons). Prevents heat-shock induction of these operons. In Chlorobium phaeobacteroides (strain DSM 266 / SMG 266 / 2430), this protein is Heat-inducible transcription repressor HrcA.